The sequence spans 95 residues: MSLTLEQVKRIAHLARIEISDDEALTTQGHLNGIFQLIEQMQAVDTTGIEPMAHAQDVSQRLREDAVSEGDRRAAYQAVAPEIEAGLYLVPKVIE.

This sequence belongs to the GatC family. In terms of assembly, heterotrimer of A, B and C subunits.

It carries out the reaction L-glutamyl-tRNA(Gln) + L-glutamine + ATP + H2O = L-glutaminyl-tRNA(Gln) + L-glutamate + ADP + phosphate + H(+). The enzyme catalyses L-aspartyl-tRNA(Asn) + L-glutamine + ATP + H2O = L-asparaginyl-tRNA(Asn) + L-glutamate + ADP + phosphate + 2 H(+). Functionally, allows the formation of correctly charged Asn-tRNA(Asn) or Gln-tRNA(Gln) through the transamidation of misacylated Asp-tRNA(Asn) or Glu-tRNA(Gln) in organisms which lack either or both of asparaginyl-tRNA or glutaminyl-tRNA synthetases. The reaction takes place in the presence of glutamine and ATP through an activated phospho-Asp-tRNA(Asn) or phospho-Glu-tRNA(Gln). In Dechloromonas aromatica (strain RCB), this protein is Aspartyl/glutamyl-tRNA(Asn/Gln) amidotransferase subunit C.